We begin with the raw amino-acid sequence, 146 residues long: Aspartate carbamoyltransferase regulatory chain (146 aa).

Positions 102, 107, 131, and 134 each coordinate Zn(2+).

The protein belongs to the PyrI family. In terms of assembly, contains catalytic and regulatory chains. Requires Zn(2+) as cofactor.

Its function is as follows. Involved in allosteric regulation of aspartate carbamoyltransferase. This chain is Aspartate carbamoyltransferase regulatory chain, found in Clostridium acetobutylicum (strain ATCC 824 / DSM 792 / JCM 1419 / IAM 19013 / LMG 5710 / NBRC 13948 / NRRL B-527 / VKM B-1787 / 2291 / W).